The primary structure comprises 1183 residues: Translation initiation factor IF-2 (1183 aa).

Disordered regions lie at residues 65 to 512 and 540 to 579; these read SSKN…KVHI and LARP…AMEL. The segment covering 83–99 has biased composition (basic and acidic residues); it reads TQKDQKTEPKKKNHDQT. The segment covering 100 to 130 has biased composition (polar residues); sequence ELSQAKLNTLLKPSQTLIKSQGSSQANNQKA. The segment covering 220-229 has biased composition (basic and acidic residues); it reads PKIDIQDKKP. A compositionally biased stretch (polar residues) spans 231–270; the sequence is QPNNQKAKTRINQGEISPQKVGQGNIQKIKSQNKQNAPSR. A compositionally biased stretch (basic and acidic residues) spans 288 to 304; it reads IRKEKPVNKPHTNEVRN. Polar residues-rich tracts occupy residues 321–336 and 357–367; these read ANRQ…NNRI and NRTTQGQNRPG. Positions 485-499 are enriched in basic and acidic residues; that stretch reads GRPDWDDSAKLDALR. Composition is skewed to basic residues over residues 544–553 and 560–574; these read SKPKVGKRNN and LKKR…RQRR. The tr-type G domain occupies 675–847; that stretch reads RRPPVVTVMG…VLLVTEVEDL (173 aa). The segment at 684-691 is G1; that stretch reads GHVDHGKT. 684–691 contributes to the GTP binding site; sequence GHVDHGKT. A G2 region spans residues 709 to 713; the sequence is GITQH. A G3 region spans residues 734–737; the sequence is DTPG. Residues 734–738 and 788–791 each bind GTP; these read DTPGH and NKID. Residues 788-791 form a G4 region; the sequence is NKID. The G5 stretch occupies residues 824–826; it reads SAI.

It belongs to the TRAFAC class translation factor GTPase superfamily. Classic translation factor GTPase family. IF-2 subfamily.

The protein localises to the cytoplasm. One of the essential components for the initiation of protein synthesis. Protects formylmethionyl-tRNA from spontaneous hydrolysis and promotes its binding to the 30S ribosomal subunits. Also involved in the hydrolysis of GTP during the formation of the 70S ribosomal complex. The protein is Translation initiation factor IF-2 of Prochlorococcus marinus (strain NATL2A).